Here is a 102-residue protein sequence, read N- to C-terminus: Large ribosomal subunit protein bL21 (102 aa).

The segment covering 79–91 has biased composition (basic residues); the sequence is RKDSKRKKGHRQP. Residues 79-102 are disordered; that stretch reads RKDSKRKKGHRQPYTKLTIDKINA.

The protein belongs to the bacterial ribosomal protein bL21 family. Part of the 50S ribosomal subunit. Contacts protein L20.

Its function is as follows. This protein binds to 23S rRNA in the presence of protein L20. The protein is Large ribosomal subunit protein bL21 of Staphylococcus carnosus (strain TM300).